The sequence spans 740 residues: MNTVEENNTKITDNNNNNNNNNNNNNNNNNNNKNNDGENLSQQLIDSNNKKLRSPIQVYFDSDVSSCSLQSQSSPQQLPTQQPIQQQINNIFNHFLPQNQAPLLQAQNQQPINNINQVSNFQIQPIPLTFQLPNNINTNTNNTNMINNVQQFQNNFLNNNDFSLTDPVPSPFVLFNNNNNNNNNNNNNNNNNINNFHHNNINNNFDNNNSNYNTINTHPNNTNNNSSNINQIQSNIYPQQNLHNPFLPIHNNNNINNNNINKNNNNYNNNNNNKNNNNNNNNNNNNNNPQLFSMEPPNGFNHSTTDNTSSVSSVPSNKKKSSKTKQKSKPLTIQQQQQHKSNYHQQPNQNSQHLQSKPNSPILISSPLNSQQNSSPPQPSPTQSFLSPPQYSQSPQNNNFNNNNNNISNNNNNNNNNNNNNNNNNNNNNNNNNNNNNNNNNNNNNNNNNNNNNINNSTNNNNNNSNTNNNTNTNTNNNNNKNNNNNNNNEIENNNNEELILLWYNSIIKNIIVDENHFKIENQFNKENGYLVFKQLFKNHFGSIGTIGKEMAEYIQLHCEVMNEITELSKFHFQSIDNFYNNYIRIINGYSLIPAKDSGATIKARPKKGAKLSKESKDILENWIKNHIAHPYPTNDEKEQLQRQTGLTPNQISNWFINTRRRKVPTLCDEAGIITNSNVMPQMTINNNNNNGGNSNFKNNNNNTITTTSTSNNNNNNNNNNHNEMECDDGENEESSEYDD.

Polar residues predominate over residues 1-13; the sequence is MNTVEENNTKITD. Disordered regions lie at residues 1–41 and 179–491; these read MNTV…ENLS and NNNN…NNEI. Composition is skewed to low complexity over residues 14 to 34, 179 to 241, 251 to 288, and 303 to 316; these read NNNNNNNNNNNNNNNNNNNKN, NNNN…PQQN, NNNNINNNNINKNNNNYNNNNNNKNNNNNNNNNNNNNN, and STTDNTSSVSSVPS. Positions 254–287 form a coiled coil; that stretch reads NINNNNINKNNNNYNNNNNNKNNNNNNNNNNNNN. Basic residues predominate over residues 317 to 328; that stretch reads NKKKSSKTKQKS. The segment covering 339-363 has biased composition (polar residues); that stretch reads HKSNYHQQPNQNSQHLQSKPNSPIL. 2 stretches are compositionally biased toward low complexity: residues 365 to 390 and 397 to 491; these read SSPLNSQQNSSPPQPSPTQSFLSPPQ and NNNF…NNEI. Residues 472 to 500 are a coiled coil; the sequence is NTNTNNNNNKNNNNNNNNEIENNNNEELI. A DNA-binding region (homeobox) is located at residues 605–667; sequence RPKKGAKLSK…NTRRRKVPTL (63 aa). Residues 686-722 show a composition bias toward low complexity; sequence NNNNNNGGNSNFKNNNNNTITTTSTSNNNNNNNNNNH. The tract at residues 686-740 is disordered; it reads NNNNNNGGNSNFKNNNNNTITTTSTSNNNNNNNNNNHNEMECDDGENEESSEYDD. The span at 726 to 740 shows a compositional bias: acidic residues; the sequence is ECDDGENEESSEYDD.

It is found in the nucleus. Its function is as follows. Putative transcription factor. The polypeptide is Homeobox protein 4 (hbx4) (Dictyostelium discoideum (Social amoeba)).